The sequence spans 312 residues: tRNA dimethylallyltransferase (312 aa).

11–18 is a binding site for ATP; that stretch reads GLTATGKT. 13-18 contributes to the substrate binding site; it reads TATGKT. The interval 36–39 is interaction with substrate tRNA; sequence DSMC.

This sequence belongs to the IPP transferase family. As to quaternary structure, monomer. Mg(2+) serves as cofactor.

It carries out the reaction adenosine(37) in tRNA + dimethylallyl diphosphate = N(6)-dimethylallyladenosine(37) in tRNA + diphosphate. Its function is as follows. Catalyzes the transfer of a dimethylallyl group onto the adenine at position 37 in tRNAs that read codons beginning with uridine, leading to the formation of N6-(dimethylallyl)adenosine (i(6)A). The chain is tRNA dimethylallyltransferase from Caldicellulosiruptor bescii (strain ATCC BAA-1888 / DSM 6725 / KCTC 15123 / Z-1320) (Anaerocellum thermophilum).